The chain runs to 475 residues: MVPQTETRAGAGFKAGVKDYRLTYYTPDYVVKDTDILAAFRMTPQPGVPPEECGAAVAAESSTGTWTTVWTDGLTTLDRYKGRCYDIEPVPGEDNQYIAYVAYPIDLFEEGSVTNLFTSIVGNVFGFKALRALRLEDLRIPPAYVKTFQGPPHGIQVERDKLNKYGRGLLGCTIKPKLGLSAKNYGRAVYECLRGGLDFTKDDENVNSQPFMRWRDRFLFVAEATYKAQSETGEIKGHYLNATAATCEEMLKRAQCAKELGVPIIMHDYLTGGFTANTSLSSYCRDHGLLLHIHRAMHAVIDRQRNHGIHFRVLAKALRLSGGDHLHSGTVVGKLEGEREVTLGFVDLMRDDYIEKDRSRGIYFTQDWCSMGGTMPVASGGIHVWHMPALVEIFGDDACLQFGGGTLGHPWGNAPGAVANRVALEACTQARNEGRDLAREGGDVIRSACKWSPELAAACEVWKEIKFEFETIDKL.

Residues 1-2 constitute a propeptide that is removed on maturation; sequence MV. P3 is modified (N-acetylproline). N6,N6,N6-trimethyllysine is present on K14. Positions 123 and 173 each coordinate substrate. K175 acts as the Proton acceptor in catalysis. K177 is a substrate binding site. Residues K201, D203, and E204 each contribute to the Mg(2+) site. K201 is subject to N6-carboxylysine. H294 serves as the catalytic Proton acceptor. Residues R295, H327, and S379 each coordinate substrate.

The protein belongs to the RuBisCO large chain family. Type I subfamily. Heterohexadecamer of 8 large chains and 8 small chains; disulfide-linked. The disulfide link is formed within the large subunit homodimers. Requires Mg(2+) as cofactor. In terms of processing, the disulfide bond which can form in the large chain dimeric partners within the hexadecamer appears to be associated with oxidative stress and protein turnover.

Its subcellular location is the plastid. It localises to the chloroplast. It catalyses the reaction 2 (2R)-3-phosphoglycerate + 2 H(+) = D-ribulose 1,5-bisphosphate + CO2 + H2O. The catalysed reaction is D-ribulose 1,5-bisphosphate + O2 = 2-phosphoglycolate + (2R)-3-phosphoglycerate + 2 H(+). In terms of biological role, ruBisCO catalyzes two reactions: the carboxylation of D-ribulose 1,5-bisphosphate, the primary event in carbon dioxide fixation, as well as the oxidative fragmentation of the pentose substrate in the photorespiration process. Both reactions occur simultaneously and in competition at the same active site. The protein is Ribulose bisphosphate carboxylase large chain of Tetradesmus obliquus (Green alga).